A 513-amino-acid chain; its full sequence is Na(+)/H(+) antiporter NhaB (513 aa).

11 helical membrane-spanning segments follow: residues 21 to 41 (ITIVLFLIINPIIFFFISPFI), 88 to 108 (IIANFEVILLLIFMVAGIYFM), 119 to 139 (LLLSIRSKMVLSLAFCLSAAF), 143 to 163 (FLDALTVVAVIISVGMGFYGV), 208 to 228 (VGTALGGVMTMVGEPQNLIIA), 247 to 267 (LPVLICGLVTCFLVEKFGVFG), 303 to 323 (ALIGIWLVVGLAFHLAAVGII), 357 to 377 (LVVFFSVVAVIIDQHLFAPII), 389 to 409 (LALFYIFNGLLSAISDNVFVA), 447 to 467 (ATPNGQAAFLFLLTSSLAPLI), and 477 to 497 (MALPYTIVLSCIGLLAVEYIL).

This sequence belongs to the NhaB Na(+)/H(+) (TC 2.A.34) antiporter family.

The protein resides in the cell inner membrane. The catalysed reaction is 2 Na(+)(in) + 3 H(+)(out) = 2 Na(+)(out) + 3 H(+)(in). In terms of biological role, na(+)/H(+) antiporter that extrudes sodium in exchange for external protons. The polypeptide is Na(+)/H(+) antiporter NhaB (Pasteurella multocida (strain Pm70)).